A 94-amino-acid chain; its full sequence is MLKPLGDRVVIEQVETEEKTASGIVLPDTAKEKPQEGRVVAVGTGRVTENGEKIALEVKEGDSVIFSKYAGTEVKYDGKEYLILRESDILAIIG.

This sequence belongs to the GroES chaperonin family. As to quaternary structure, heptamer of 7 subunits arranged in a ring. Interacts with the chaperonin GroEL.

It localises to the cytoplasm. Together with the chaperonin GroEL, plays an essential role in assisting protein folding. The GroEL-GroES system forms a nano-cage that allows encapsulation of the non-native substrate proteins and provides a physical environment optimized to promote and accelerate protein folding. GroES binds to the apical surface of the GroEL ring, thereby capping the opening of the GroEL channel. This is Co-chaperonin GroES from Halalkalibacterium halodurans (strain ATCC BAA-125 / DSM 18197 / FERM 7344 / JCM 9153 / C-125) (Bacillus halodurans).